A 504-amino-acid polypeptide reads, in one-letter code: Zinc finger protein AEBP2 (504 aa).

The segment at 1–219 (MAAALADMAD…SRMDSEDSIS (219 aa)) is disordered. The residue at position 2 (Ala-2) is an N-acetylalanine. Residues 16–30 (RLSPLSPGSPGPAAR) show a composition bias toward low complexity. Phosphoserine is present on residues Ser-18, Ser-21, and Ser-24. A compositionally biased stretch (acidic residues) spans 36-49 (PEEEEEEDDEEAEA). Positions 59 to 69 (GGAGGGAGGGE) are enriched in gly residues. Positions 86-110 (GDEDEDEEDDEDEGSSSGGAEEESS) are enriched in acidic residues. Low complexity predominate over residues 129–140 (SLSPGAASSSSG). Phosphoserine is present on Ser-131. Basic and acidic residues predominate over residues 142 to 153 (GDGKEGLEEPKG). Gly residues-rich tracts occupy residues 154 to 168 (PRGG…GGGS) and 178 to 189 (GDEGYGTGGGGS). A phosphoserine mark is found at Ser-199, Ser-203, and Ser-204. The interval 202 to 287 (MSSDGEPLSR…IHVDGQRGGV (86 aa)) is interaction with RBBP4. The C2H2-type 1 zinc-finger motif lies at 254–279 (YNCCWDQCQACFNSSPDLADHIRSIH). The C2H2-type 2; degenerate zinc-finger motif lies at 293-315 (KGCKVYNTPSTSQSWLQRHMLTH). A C2H2-type 3 zinc finger spans residues 321–345 (FKCVVGGCNASFASQGGLARHVPTH). The span at 345–358 (HFSQQNSSKVSSQP) shows a compositional bias: polar residues. Residues 345–387 (HFSQQNSSKVSSQPKAKEESPSKAGMNKRRKLKNKRRRSLPRP) form a disordered region. The span at 370–385 (MNKRRKLKNKRRRSLP) shows a compositional bias: basic residues. Ser-383 is subject to Phosphoserine. Positions 400 to 471 (RHRAICFNLS…QLKTKVVHLS (72 aa)) are interaction with SUZ12. Residues 488–504 (TMPQKRLKRFDILNFPR) are important for nucleosome binding activity of the PRC2 complex.

It belongs to the AEBP2/jing C2H2-type zinc-finger family. In terms of assembly, self-associates. Associates with the PRC2 complex, which consists of the core components EED, EZH1 or EZH2, SUZ12, and RBBP4, and various combinations of accessory subunits including AEBP2, JARID2, PHF19, MTF2 and EPOP. Found in a monomeric PRC2.2 (class 2) complex consisting of at least SUZ12, RBBP4, AEBP2 and JARID2. Within the PRC2 complex, interacts directly with SUZ12; competes with PHF19 for SUZ12 binding. Interacts with EED, EZH2, and RBBP4. May also interact with RBBP7. As to expression, expressed in brain, brown adipose tissue, white adipose tissue, heart, kidney, lung, skeletal muscle, small intestine and spleen. Expressed at low levels in liver.

It localises to the nucleus. Functionally, acts as an accessory subunit for the core Polycomb repressive complex 2 (PRC2), which mediates histone H3K27 (H3K27me3) trimethylation on chromatin leading to transcriptional repression of the affected target gene. Plays a role in nucleosome localization of the PRC2 complex. In Mus musculus (Mouse), this protein is Zinc finger protein AEBP2 (Aebp2).